A 121-amino-acid polypeptide reads, in one-letter code: UPF0102 protein Dhaf_3740 (121 aa).

Belongs to the UPF0102 family.

The polypeptide is UPF0102 protein Dhaf_3740 (Desulfitobacterium hafniense (strain DSM 10664 / DCB-2)).